The sequence spans 577 residues: MNIQALLSEKVSQAMIAAGAPADCEPQVRQSAKVQFGDYQANGMMAVAKKLGMAPRQLAEQVLTHLDLSGIASKVEIAGPGFINIFLEPAFLAEQVQQALTSDRLGVSQPTRQTIVVDYSAPNVAKEMHVGHLRSTIIGDAAVRTLEFLGHHVIRANHVGDWGTQFGMLIAWLEKQQQENAGDMALADLEGFYRDAKKHYDEDEAFAERARNYVVKLQSGDTYFREMWRKLVDITMTQNQITYDRLNVTLTRDDVMGESLYNPMLPGIVADLKAKGLAVESEGATVVFLDEFKNKEGDPMGVIIQKKDGGYLYTTTDIACAKYRYETLHADRVLYYIDSRQHQHLMQAWTIVRKAGYVPDSVPLEHHMFGMMLGKDGKPFKTRAGGTVKLADLLDEALERARRLVAEKNPDMSADELEKLANAVGIGAVKYADLSKNRTTDYIFDWDNMLAFEGNTAPYMQYAYTRVLSVFRKADIDEQALASAPVIISEDREAQLAARLLQFEETLTVVAREGTPHVMCAYLYDVAGLFSGFYEHCPILSAENDAVRNSRLKLAQLTAKTLKLGLDTLGIETVERM.

The 'HIGH' region motif lies at 122–132 (PNVAKEMHVGH).

The protein belongs to the class-I aminoacyl-tRNA synthetase family. In terms of assembly, monomer.

It is found in the cytoplasm. It carries out the reaction tRNA(Arg) + L-arginine + ATP = L-arginyl-tRNA(Arg) + AMP + diphosphate. In Salmonella enteritidis PT4 (strain P125109), this protein is Arginine--tRNA ligase.